Reading from the N-terminus, the 305-residue chain is uncharacterized protein (305 aa).

Transmembrane regions (helical) follow at residues 4–24, 38–58, 67–87, 95–115, 125–145, 152–172, 183–203, 215–235, 250–270, and 272–292; these read LNIY…FNLA, AWRF…TEGI, AVSY…LFFV, VNGA…ARII, VLGI…GSIE, ISGG…YGVL, LSTT…VSLF, IGVW…GYLW, LFFN…GTPI, and VFQV…SGVI. EamA domains are found at residues 15-140 and 164-290; these read IFTG…LVIT and VCWA…TASG.

This sequence belongs to the EamA transporter family.

The protein resides in the cell membrane. This is an uncharacterized protein from Bacillus subtilis (strain 168).